A 266-amino-acid chain; its full sequence is Phosphoethanolamine N-methyltransferase (266 aa).

Gln18 contributes to the phosphoethanolamine binding site. Residue Tyr19 is part of the active site. Residue Tyr27 participates in phosphoethanolamine binding. Ile36, Ser37, Gly63, Asp85, Ile86, Asp110, Ile111, and Arg127 together coordinate S-adenosyl-L-methionine. The active site involves His132. Positions 160, 175, 179, 181, and 247 each coordinate phosphoethanolamine.

It belongs to the class I-like SAM-binding methyltransferase superfamily. PEAMT family. In terms of assembly, monomer.

It localises to the golgi apparatus membrane. Its subcellular location is the cytoplasm. It carries out the reaction phosphoethanolamine + S-adenosyl-L-methionine = N-methylethanolamine phosphate + S-adenosyl-L-homocysteine + H(+). The catalysed reaction is N-methylethanolamine phosphate + S-adenosyl-L-methionine = N,N-dimethylethanolamine phosphate + S-adenosyl-L-homocysteine + H(+). The enzyme catalyses N,N-dimethylethanolamine phosphate + S-adenosyl-L-methionine = phosphocholine + S-adenosyl-L-homocysteine + H(+). It participates in phospholipid metabolism; phosphatidylcholine biosynthesis; phosphocholine from phosphoethanolamine. Inhibited by phosphocholine. Inhibited by hexadecylphosphocholine (miltefosine). Inhibited by S-adenosyl-l-homocysteine. Weakly inhibited in vitro by amodiaquine, chloroquine and primaquine. Inhibited by NSC-158011. In terms of biological role, catalyzes N-methylation of phosphoethanolamine, phosphomonomethylethanolamine and phosphodimethylethanolamine, the three methylation steps required to convert phosphoethanolamine to phosphocholine. Has no ethanolamine- or phosphatidylethanolamine-N-methyltransferase activity. Required for gametocyte development, maturation and transmission to mosquitoes and for oocyst formation in the mosquito midgut. This chain is Phosphoethanolamine N-methyltransferase, found in Plasmodium falciparum (isolate 3D7).